Reading from the N-terminus, the 428-residue chain is Adenylosuccinate synthetase (428 aa).

GTP contacts are provided by residues 11-17 (GDEGKGK) and 39-41 (GHT). The Proton acceptor role is filled by D12. 2 residues coordinate Mg(2+): D12 and G39. IMP-binding positions include 12-15 (DEGK), 37-40 (NAGH), T130, R144, N226, T241, and R305. Residue H40 is the Proton donor of the active site. 301–307 (VTTGRKR) contributes to the substrate binding site. GTP contacts are provided by residues R307, 333 to 335 (KLD), and 415 to 417 (GTG).

This sequence belongs to the adenylosuccinate synthetase family. As to quaternary structure, homodimer. The cofactor is Mg(2+).

The protein localises to the cytoplasm. It catalyses the reaction IMP + L-aspartate + GTP = N(6)-(1,2-dicarboxyethyl)-AMP + GDP + phosphate + 2 H(+). It participates in purine metabolism; AMP biosynthesis via de novo pathway; AMP from IMP: step 1/2. In terms of biological role, plays an important role in the de novo pathway and in the salvage pathway of purine nucleotide biosynthesis. Catalyzes the first committed step in the biosynthesis of AMP from IMP. The polypeptide is Adenylosuccinate synthetase (Candida dubliniensis (strain CD36 / ATCC MYA-646 / CBS 7987 / NCPF 3949 / NRRL Y-17841) (Yeast)).